A 386-amino-acid polypeptide reads, in one-letter code: Diels-Alderase phm7 (386 aa).

A beta-sandwich motif region spans residues 1–223; the sequence is MSEPTSSSSL…MVRGWSARPW (223 aa). Substrate contacts are provided by Glu-51, Asn-84, and Lys-356. Positions 223-386 are beta-barrel motif; the sequence is WPTFMNDAYY…FGGQLQIPVP (164 aa).

This sequence belongs to the Diels-Alderase family.

It functions in the pathway secondary metabolite biosynthesis. 3-aminomethyl-p-menthane which is similar to the phomasetin substructure, dose-dependently inhibits phm7 activity in vitro and production of phomasetin in the fungus. Functionally, diels-Alderase; part of the gene cluster that mediates the biosynthesis of the trans-fused decalin-containing tetramic acid phomasetin, the stereochemical opposite of the HIV-1 integrase inhibitor equisetin. The PKS module of phm1 together with the enoylreductase phm4 catalyze the formation of the polyketide unit which is then conjugated to L-serine by the condensation domain of the phm1 NRPS module. Activity of the Dieckmann cyclase domain (RED) of phm1 results in release of the Dieckmann product intermediate. The Diels-Alderase phm7 then uses the Dieckmann product of phm1 as substrate and catalyzes the Diels-Alder cycloaddition to form the decalin ring of N-desmethylphomasetin. N-desmethylphomasetin is further methylated to phomasetin by the methyltransferase phm5. The chain is Diels-Alderase phm7 from Pyrenochaetopsis sp.